A 364-amino-acid polypeptide reads, in one-letter code: Lysophosphatidic acid receptor 1 (364 aa).

At 1–50 (MAAAFTSSPVVSQPQFTAMNEQQCFSNESIAFFYNRSGKYLATEWNTVTK) the chain is on the extracellular side. 2 disulfide bridges follow: cysteine 24/cysteine 190 and cysteine 188/cysteine 195. N-linked (GlcNAc...) asparagine glycosylation is found at asparagine 27 and asparagine 35. Lysine 39 is a binding site for a 1-acyl-sn-glycero-3-phosphate. A helical transmembrane segment spans residues 51–75 (LVMGLGITVCIFIMLANLLVMVAIY). Over 76-83 (VNRRFHFP) the chain is Cytoplasmic. A helical membrane pass occupies residues 84 to 107 (IYYLMANLAAADFFAGLAYFYLMF). The Extracellular segment spans residues 108-121 (NTGPNTRRLTVSTW). Residues 122–144 (LLRQGLIDTSLTVSVANLLAIAI) traverse the membrane as a helical segment. Residue 124 to 129 (RQGLID) coordinates a 1-acyl-sn-glycero-3-phosphate. The Cytoplasmic segment spans residues 145-163 (ERHITVFRMQLHARMSNRR). Residues 164–184 (VVVVIVVIWTMAIVMGAIPSV) form a helical membrane-spanning segment. The Extracellular portion of the chain corresponds to 185 to 204 (GWNCICDIENCSNMAPLYSD). The helical transmembrane segment at 205 to 225 (SYLVFWAIFNLVTFVVMVVLY) threads the bilayer. Tryptophan 210 serves as a coordination point for a 1-acyl-sn-glycero-3-phosphate. The Cytoplasmic portion of the chain corresponds to 226-255 (AHIFGYVRQRTMRMSRHSSGPRRNRDTMMS). A helical membrane pass occupies residues 256–280 (LLKTVVIVLGAFIICWTPGLVLLLL). The Extracellular portion of the chain corresponds to 281 to 294 (DVCCPQCDVLAYEK). A disulfide bond links cysteine 284 and cysteine 287. Residues 295-315 (FFLLLAEFNSAMNPIIYSYRD) traverse the membrane as a helical segment. The Cytoplasmic portion of the chain corresponds to 316-364 (KEMSATFRQILCCQRSENTSGPTEGSDRSASSLNHTILAGVHSNDHSVV). Serine 341 carries the phosphoserine modification. Threonine 351 carries the post-translational modification Phosphothreonine.

This sequence belongs to the G-protein coupled receptor 1 family. In terms of assembly, interacts with RALA and GRK2. Interacts with GNAQ and GNA13. Interacts with CD14; the interaction is enhanced by exposure to bacterial lipopolysaccharide (LPS). N-glycosylated.

It is found in the cell surface. The protein localises to the cell membrane. The protein resides in the endosome. In terms of biological role, receptor for lysophosphatidic acid (LPA). Plays a role in the reorganization of the actin cytoskeleton, cell migration, differentiation and proliferation, and thereby contributes to the responses to tissue damage and infectious agents. Activates downstream signaling cascades via the G(i)/G(o), G(12)/G(13), and G(q) families of heteromeric G proteins. Signaling inhibits adenylyl cyclase activity and decreases cellular cAMP levels. Signaling triggers an increase of cytoplasmic Ca(2+) levels. Activates RALA; this leads to the activation of phospholipase C (PLC) and the formation of inositol 1,4,5-trisphosphate. Signaling mediates activation of down-stream MAP kinases. Contributes to the regulation of cell shape. Promotes Rho-dependent reorganization of the actin cytoskeleton in neuronal cells and neurite retraction. Promotes the activation of Rho and the formation of actin stress fibers. Promotes formation of lamellipodia at the leading edge of migrating cells via activation of RAC1. Through its function as LPA receptor, plays a role in chemotaxis and cell migration, including responses to injury and wounding. Plays a role in triggering inflammation in response to bacterial lipopolysaccharide (LPS) via its interaction with CD14. Promotes cell proliferation in response to LPA. Inhibits the intracellular ciliogenesis pathway in response to LPA and through AKT1 activation. Required for normal skeleton development. May play a role in osteoblast differentiation. Required for normal brain development. Required for normal proliferation, survival and maturation of newly formed neurons in the adult dentate gyrus. Plays a role in pain perception and in the initiation of neuropathic pain. The polypeptide is Lysophosphatidic acid receptor 1 (LPAR1) (Bos taurus (Bovine)).